We begin with the raw amino-acid sequence, 156 residues long: Small ribosomal subunit protein uS7 (156 aa).

It belongs to the universal ribosomal protein uS7 family. In terms of assembly, part of the 30S ribosomal subunit. Contacts proteins S9 and S11.

One of the primary rRNA binding proteins, it binds directly to 16S rRNA where it nucleates assembly of the head domain of the 30S subunit. Is located at the subunit interface close to the decoding center, probably blocks exit of the E-site tRNA. The sequence is that of Small ribosomal subunit protein uS7 from Rhizobium johnstonii (strain DSM 114642 / LMG 32736 / 3841) (Rhizobium leguminosarum bv. viciae).